The chain runs to 214 residues: uncharacterized protein (214 aa).

The first 17 residues, 1 to 17, serve as a signal peptide directing secretion; the sequence is MWCFIVFLTIFLPTLEG. Residues asparagine 88 and asparagine 139 are each glycosylated (N-linked (GlcNAc...) asparagine).

As to expression, component of the acid-insoluble organic matrix of calcified layers of the shell (at protein level).

The protein localises to the secreted. This is an uncharacterized protein from Lottia gigantea (Giant owl limpet).